A 132-amino-acid polypeptide reads, in one-letter code: Large ribosomal subunit protein uL24 (132 aa).

It belongs to the universal ribosomal protein uL24 family. In terms of assembly, part of the 50S ribosomal subunit.

One of two assembly initiator proteins, it binds directly to the 5'-end of the 23S rRNA, where it nucleates assembly of the 50S subunit. Functionally, one of the proteins that surrounds the polypeptide exit tunnel on the outside of the subunit. This chain is Large ribosomal subunit protein uL24, found in Synechococcus sp. (strain JA-3-3Ab) (Cyanobacteria bacterium Yellowstone A-Prime).